The following is a 340-amino-acid chain: MSTDKITFLLNWQPTPYHIPIFLAQTKGYFKEQGLDMAILEPTNPSDVTELIGSGKVDMGLKAMIHTLAAKARGFPVTSVASLLDEPFTGVLYLKGSGITEDFQSLKGKKIGYVGEFGKIQIDELTKHYGMKPEDYTAVRCGMNVAKYIIEGKIDAGIGIECMQQVELEEYLAKQGRPASDAKMLRIDKLACLGCCCFCTVLYICNDEFLKKNPEKVRKFLKAIKKATDYVLADPVKAWKEYIDFKPQLNNDLSYKQYQRCYAYFSSSLYNVHRDWKKVTGYGKRLAILPPDYVSNYTNEYLSWPEPEEVSDPLEAQRLMAIHQEKCRQEGTFKRLALPA.

K62 is subject to N6-(pyridoxal phosphate)lysine. H66 is an active-site residue. Residue G115–G118 participates in pyridoxal 5'-phosphate binding. The CCCFC; essential for catalytic activity, may be the site of iron coordination signature appears at C195 to C199.

The protein belongs to the NMT1/THI5 family. In terms of assembly, homodimer. Fe cation is required as a cofactor.

It carries out the reaction N(6)-(pyridoxal phosphate)-L-lysyl-[4-amino-5-hydroxymethyl-2-methylpyrimidine phosphate synthase] + L-histidyl-[4-amino-5-hydroxymethyl-2-methylpyrimidine phosphate synthase] + 2 Fe(3+) + 4 H2O = L-lysyl-[4-amino-5-hydroxymethyl-2-methylpyrimidine phosphate synthase] + (2S)-2-amino-5-hydroxy-4-oxopentanoyl-[4-amino-5-hydroxymethyl-2-methylpyrimidine phosphate synthase] + 4-amino-2-methyl-5-(phosphooxymethyl)pyrimidine + 3-oxopropanoate + 2 Fe(2+) + 2 H(+). It participates in cofactor biosynthesis; thiamine diphosphate biosynthesis. Responsible for the formation of the pyrimidine heterocycle in the thiamine biosynthesis pathway. Catalyzes the formation of hydroxymethylpyrimidine phosphate (HMP-P) from histidine and pyridoxal phosphate (PLP). The protein uses PLP and the active site histidine to form HMP-P, generating an inactive enzyme. The enzyme can only undergo a single turnover, which suggests it is a suicide enzyme. The sequence is that of 4-amino-5-hydroxymethyl-2-methylpyrimidine phosphate synthase THI5 from Saccharomyces cerevisiae (strain ATCC 204508 / S288c) (Baker's yeast).